We begin with the raw amino-acid sequence, 463 residues long: Chromosomal replication initiator protein DnaA (463 aa).

Residues 1–83 are domain I, interacts with DnaA modulators; sequence MSTNQIILTD…LQLFQHYNNT (83 aa). Positions 83–124 are domain II; the sequence is TIKSIEIITKELPGTTQTVTELPTKTFADIGSSELNSENIFS. Positions 125–343 are domain III, AAA+ region; it reads TLDVRFTFDN…GALNKVIAHS (219 aa). ATP is bound by residues Gly-171, Gly-173, Lys-174, and Thr-175. The tract at residues 344–463 is domain IV, binds dsDNA; it reads NFTLKEITLE…INLLMKILQN (120 aa).

It belongs to the DnaA family. As to quaternary structure, oligomerizes as a right-handed, spiral filament on DNA at oriC.

It localises to the cytoplasm. Its function is as follows. Plays an essential role in the initiation and regulation of chromosomal replication. ATP-DnaA binds to the origin of replication (oriC) to initiate formation of the DNA replication initiation complex once per cell cycle. Binds the DnaA box (a 9 base pair repeat at the origin) and separates the double-stranded (ds)DNA. Forms a right-handed helical filament on oriC DNA; dsDNA binds to the exterior of the filament while single-stranded (ss)DNA is stabiized in the filament's interior. The ATP-DnaA-oriC complex binds and stabilizes one strand of the AT-rich DNA unwinding element (DUE), permitting loading of DNA polymerase. After initiation quickly degrades to an ADP-DnaA complex that is not apt for DNA replication. Binds acidic phospholipids. This Rickettsia conorii (strain ATCC VR-613 / Malish 7) protein is Chromosomal replication initiator protein DnaA.